A 473-amino-acid polypeptide reads, in one-letter code: Bifunctional NAD(P)H-hydrate repair enzyme Nnr (473 aa).

Residues 1–211 (MRHYYSVDTI…AHTDVLGFEA (211 aa)) form an NAD(P)H-hydrate epimerase region. A YjeF N-terminal domain is found at 10–205 (IRAAEAPLLA…DIGLDLAHTD (196 aa)). The NADPHX 1; for epimerase activity stretch occupies residues 62–66 (DNGGD). K(+) is bound by residues Asn63 and Asp119. An NADPHX 1; for epimerase activity region spans residues 123-129 (GISGSGP). Asp152 contacts (6S)-NADPHX. Ser155 provides a ligand contact to K(+). Residues 210–473 (EATDVAARWP…GHIRAALAAL (264 aa)) enclose the YjeF C-terminal domain. The tract at residues 211 to 473 (ATDVAARWPV…GHIRAALAAL (263 aa)) is ADP-dependent (S)-NAD(P)H-hydrate dehydratase. Gly298 contributes to the (6S)-NADPHX binding site. The NADPHX 2; for dehydratase activity stretch occupies residues 348-354 (HAGEFAR). Residues 382 to 386 (KGNVT) and 402 to 411 (QSWAATAGSG) each bind ADP. Asp412 contributes to the (6S)-NADPHX binding site.

In the N-terminal section; belongs to the NnrE/AIBP family. It in the C-terminal section; belongs to the NnrD/CARKD family. K(+) serves as cofactor.

It carries out the reaction (6S)-NADHX + ADP = AMP + phosphate + NADH + H(+). The enzyme catalyses (6S)-NADPHX + ADP = AMP + phosphate + NADPH + H(+). The catalysed reaction is (6R)-NADHX = (6S)-NADHX. It catalyses the reaction (6R)-NADPHX = (6S)-NADPHX. Its function is as follows. Bifunctional enzyme that catalyzes the epimerization of the S- and R-forms of NAD(P)HX and the dehydration of the S-form of NAD(P)HX at the expense of ADP, which is converted to AMP. This allows the repair of both epimers of NAD(P)HX, a damaged form of NAD(P)H that is a result of enzymatic or heat-dependent hydration. In Mycobacterium tuberculosis (strain CDC 1551 / Oshkosh), this protein is Bifunctional NAD(P)H-hydrate repair enzyme Nnr (nnr).